The following is a 59-amino-acid chain: Large ribosomal subunit protein bL32 (59 aa).

The tract at residues 1–59 (MAVQQNKKSPSKRGMHRSHDALTAPALSVDSTTGEVHRPHHISPNGMYRGRKVVKAKGE) is disordered. Positions 49-59 (RGRKVVKAKGE) are enriched in basic residues.

This sequence belongs to the bacterial ribosomal protein bL32 family.

The sequence is that of Large ribosomal subunit protein bL32 (rpmF) from Neisseria meningitidis serogroup B (strain ATCC BAA-335 / MC58).